Reading from the N-terminus, the 219-residue chain is ATP-dependent Clp protease proteolytic subunit 4 (219 aa).

The Nucleophile role is filled by serine 125. Residue histidine 150 is part of the active site.

This sequence belongs to the peptidase S14 family. As to quaternary structure, fourteen ClpP subunits assemble into 2 heptameric rings which stack back to back to give a disk-like structure with a central cavity, resembling the structure of eukaryotic proteasomes.

The protein localises to the cytoplasm. It carries out the reaction Hydrolysis of proteins to small peptides in the presence of ATP and magnesium. alpha-casein is the usual test substrate. In the absence of ATP, only oligopeptides shorter than five residues are hydrolyzed (such as succinyl-Leu-Tyr-|-NHMec, and Leu-Tyr-Leu-|-Tyr-Trp, in which cleavage of the -Tyr-|-Leu- and -Tyr-|-Trp bonds also occurs).. Cleaves peptides in various proteins in a process that requires ATP hydrolysis. Has a chymotrypsin-like activity. Plays a major role in the degradation of misfolded proteins. This Prochlorococcus marinus (strain MIT 9312) protein is ATP-dependent Clp protease proteolytic subunit 4.